A 341-amino-acid chain; its full sequence is GTP-binding protein REM 2 (341 aa).

The span at 1–13 shows a compositional bias: acidic residues; that stretch reads MHTDLDTDMDMDT. 2 disordered regions span residues 1-71 and 84-106; these read MHTD…GSMP and VDEL…GSGE. Residues 18–30 are compositionally biased toward polar residues; that stretch reads LCSSSSRQASPLG. Position 27 is a phosphoserine (Ser-27). Positions 90–106 are enriched in low complexity; it reads PPQASPSGSSDSLGSGE. Residues 122 to 129, 230 to 233, and 261 to 262 contribute to the GTP site; these read GESGVGKS, NKSD, and AA. A disordered region spans residues 282–309; it reads RGRGHAGGQRPEPSSPDGPAPPTRRESL. Pro residues predominate over residues 294–303; the sequence is PSSPDGPAPP. The residue at position 296 (Ser-296) is a Phosphoserine.

It belongs to the small GTPase superfamily. RGK family.

The protein localises to the cell membrane. In terms of biological role, binds GTP saturably and exhibits a low intrinsic rate of GTP hydrolysis. The protein is GTP-binding protein REM 2 (Rem2) of Mus musculus (Mouse).